A 644-amino-acid chain; its full sequence is UvrABC system protein C (644 aa).

Residues 47–125 (ARPGVYRMLD…IKRYRPPYNV (79 aa)) form the GIY-YIG domain. The UVR domain maps to 235-270 (TAVQKRLGEAMTRAADAMDFEQAAVLRDRLKALTFI).

Belongs to the UvrC family. In terms of assembly, interacts with UvrB in an incision complex.

It is found in the cytoplasm. Its function is as follows. The UvrABC repair system catalyzes the recognition and processing of DNA lesions. UvrC both incises the 5' and 3' sides of the lesion. The N-terminal half is responsible for the 3' incision and the C-terminal half is responsible for the 5' incision. The polypeptide is UvrABC system protein C (Sphingopyxis alaskensis (strain DSM 13593 / LMG 18877 / RB2256) (Sphingomonas alaskensis)).